The sequence spans 225 residues: Peptidyl-tRNA hydrolase (225 aa).

Tyrosine 14 lines the tRNA pocket. Histidine 19 (proton acceptor) is an active-site residue. Residues phenylalanine 64, asparagine 66, and asparagine 112 each coordinate tRNA. The disordered stretch occupies residues 182–225 (AVALRMQPPKPEKPKPAAKAPEAQAPEAAPDERSALQKLADRFR). Residues 198-209 (AAKAPEAQAPEA) show a composition bias toward low complexity. The span at 211–225 (PDERSALQKLADRFR) shows a compositional bias: basic and acidic residues.

This sequence belongs to the PTH family. Monomer.

It localises to the cytoplasm. The catalysed reaction is an N-acyl-L-alpha-aminoacyl-tRNA + H2O = an N-acyl-L-amino acid + a tRNA + H(+). Functionally, hydrolyzes ribosome-free peptidyl-tRNAs (with 1 or more amino acids incorporated), which drop off the ribosome during protein synthesis, or as a result of ribosome stalling. Its function is as follows. Catalyzes the release of premature peptidyl moieties from peptidyl-tRNA molecules trapped in stalled 50S ribosomal subunits, and thus maintains levels of free tRNAs and 50S ribosomes. The polypeptide is Peptidyl-tRNA hydrolase (Cereibacter sphaeroides (strain ATCC 17029 / ATH 2.4.9) (Rhodobacter sphaeroides)).